A 116-amino-acid chain; its full sequence is Protein Rev (116 aa).

2 positions are modified to phosphoserine; by host CK2: Ser-5 and Ser-8. Residues Leu-18–Asn-26 are homomultimerization. A disordered region spans residues Tyr-23–Arg-48. Residues Thr-34–Arg-50 carry the Nuclear localization signal and RNA-binding (RRE) motif. Basic residues predominate over residues Gln-36–Glu-47. Residues Phe-73 to Asp-84 carry the Nuclear export signal and binding to XPO1 motif. Residues Gly-90–Glu-116 form a disordered region. Phosphoserine; by host is present on residues Ser-92 and Ser-99.

It belongs to the HIV-1 REV protein family. Homomultimer; when bound to the RRE. Multimeric assembly is essential for activity and may involve XPO1. Binds to human KPNB1, XPO1, TNPO1, RANBP5 and IPO7. Interacts with the viral Integrase. Interacts with human KHDRBS1. Interacts with human NAP1; this interaction decreases Rev multimerization and stimulates its activity. Interacts with human DEAD-box helicases DDX3 and DDX24; these interactions may serve for viral RNA export to the cytoplasm and packaging, respectively. Interacts with human PSIP1; this interaction may inhibit HIV-1 DNA integration by promoting dissociation of the Integrase-LEDGF/p75 complex. Post-translationally, asymmetrically arginine dimethylated at one site by host PRMT6. Methylation impairs the RNA-binding activity and export of viral RNA from the nucleus to the cytoplasm. Phosphorylated by protein kinase CK2. Presence of, and maybe binding to the N-terminus of the regulatory beta subunit of CK2 is necessary for CK2-mediated Rev's phosphorylation.

The protein localises to the host nucleus. The protein resides in the host nucleolus. It localises to the host cytoplasm. Its function is as follows. Escorts unspliced or incompletely spliced viral pre-mRNAs (late transcripts) out of the nucleus of infected cells. These pre-mRNAs carry a recognition sequence called Rev responsive element (RRE) located in the env gene, that is not present in fully spliced viral mRNAs (early transcripts). This function is essential since most viral proteins are translated from unspliced or partially spliced pre-mRNAs which cannot exit the nucleus by the pathway used by fully processed cellular mRNAs. Rev itself is translated from a fully spliced mRNA that readily exits the nucleus. Rev's nuclear localization signal (NLS) binds directly to KPNB1/Importin beta-1 without previous binding to KPNA1/Importin alpha-1. KPNB1 binds to the GDP bound form of RAN (Ran-GDP) and targets Rev to the nucleus. In the nucleus, the conversion from Ran-GDP to Ran-GTP dissociates Rev from KPNB1 and allows Rev's binding to the RRE in viral pre-mRNAs. Rev multimerization on the RRE via cooperative assembly exposes its nuclear export signal (NES) to the surface. Rev can then form a complex with XPO1/CRM1 and Ran-GTP, leading to nuclear export of the complex. Conversion from Ran-GTP to Ran-GDP mediates dissociation of the Rev/RRE/XPO1/RAN complex, so that Rev can return to the nucleus for a subsequent round of export. Beside KPNB1, also seems to interact with TNPO1/Transportin-1, RANBP5/IPO5 and IPO7/RANBP7 for nuclear import. The nucleoporin-like HRB/RIP is an essential cofactor that probably indirectly interacts with Rev to release HIV RNAs from the perinuclear region to the cytoplasm. This chain is Protein Rev, found in Human immunodeficiency virus type 1 group M subtype B (isolate YU-2) (HIV-1).